Reading from the N-terminus, the 187-residue chain is Putative adenylate kinase (187 aa).

Residues glycine 10, glycine 12, lysine 13, threonine 14, and valine 15 each coordinate ATP. The segment at 30 to 53 is NMP; that stretch reads SLSQFVIENKLYTEYDELRQSYII. The LID stretch occupies residues 103–113; that stretch reads GRGWADIKVAE. An ATP-binding site is contributed by arginine 104.

Belongs to the adenylate kinase family. AK6 subfamily. In terms of assembly, interacts with uS11. Not a structural component of 40S pre-ribosomes, but transiently interacts with them by binding to uS11.

It carries out the reaction AMP + ATP = 2 ADP. The catalysed reaction is ATP + H2O = ADP + phosphate + H(+). In terms of biological role, broad-specificity nucleoside monophosphate (NMP) kinase that catalyzes the reversible transfer of the terminal phosphate group between nucleoside triphosphates and monophosphates. Also has ATPase activity. Involved in the late maturation steps of the 30S ribosomal particles, specifically 16S rRNA maturation. While NMP activity is not required for ribosome maturation, ATPase activity is. Associates transiently with small ribosomal subunit protein uS11. ATP hydrolysis breaks the interaction with uS11. May temporarily remove uS11 from the ribosome to enable a conformational change of the ribosomal RNA that is needed for the final maturation step of the small ribosomal subunit. This chain is Putative adenylate kinase, found in Saccharolobus islandicus (strain M.16.4 / Kamchatka #3) (Sulfolobus islandicus).